We begin with the raw amino-acid sequence, 371 residues long: Putative F-box/kelch-repeat protein At3g10510 (371 aa).

The F-box domain occupies 13–61 (SVMTSIPDDVIMECIAPRVPRYNHSMLSLVSKQFRSLVASPRLYKTRSL). 3 Kelch repeats span residues 123–165 (NIFV…DMPV), 178–229 (KIYI…GPSS), and 257–305 (NECV…YIVS).

This is Putative F-box/kelch-repeat protein At3g10510 from Arabidopsis thaliana (Mouse-ear cress).